A 204-amino-acid polypeptide reads, in one-letter code: Large ribosomal subunit protein uL22c (204 aa).

Belongs to the universal ribosomal protein uL22 family. Part of the 50S ribosomal subunit.

The protein localises to the plastid. Its subcellular location is the chloroplast. Functionally, this protein binds specifically to 23S rRNA. In terms of biological role, the globular domain of the protein is located near the polypeptide exit tunnel on the outside of the subunit, while an extended beta-hairpin is found that lines the wall of the exit tunnel in the center of the 70S ribosome. The polypeptide is Large ribosomal subunit protein uL22c (rpl22) (Pisum sativum (Garden pea)).